A 304-amino-acid chain; its full sequence is N-acetylmuramic acid 6-phosphate etherase (304 aa).

Positions 62 to 225 (IVQAFQNGGR…TTASMVMIGK (164 aa)) constitute an SIS domain. The active-site Proton donor is glutamate 90. Glutamate 121 is a catalytic residue.

It belongs to the GCKR-like family. MurNAc-6-P etherase subfamily. Homodimer.

It catalyses the reaction N-acetyl-D-muramate 6-phosphate + H2O = N-acetyl-D-glucosamine 6-phosphate + (R)-lactate. It functions in the pathway amino-sugar metabolism; 1,6-anhydro-N-acetylmuramate degradation. Its pathway is amino-sugar metabolism; N-acetylmuramate degradation. The protein operates within cell wall biogenesis; peptidoglycan recycling. Specifically catalyzes the cleavage of the D-lactyl ether substituent of MurNAc 6-phosphate, producing GlcNAc 6-phosphate and D-lactate. Together with AnmK, is also required for the utilization of anhydro-N-acetylmuramic acid (anhMurNAc) either imported from the medium or derived from its own cell wall murein, and thus plays a role in cell wall recycling. This Actinobacillus pleuropneumoniae serotype 5b (strain L20) protein is N-acetylmuramic acid 6-phosphate etherase.